Reading from the N-terminus, the 180-residue chain is MNFKGTTVIAIRRAGKTVVAADGQVTFGYTVLKSNAVKIRKLVNGKILAGFAGSTSDAITLFEKFEEKVKSREDGIIDIKRAAVDLAKDWRSDKILHKLEAMMLVADSDNILLISGTGDVVEPEEDVISIGSGGNYAYSAALAYMENKKLSAADIAFKALKIAARVCIYTNSNIVLEEIG.

Residue T6 is part of the active site. A164, C167, and T170 together coordinate Na(+).

The protein belongs to the peptidase T1B family. HslV subfamily. As to quaternary structure, a double ring-shaped homohexamer of HslV is capped on each side by a ring-shaped HslU homohexamer. The assembly of the HslU/HslV complex is dependent on binding of ATP.

Its subcellular location is the cytoplasm. It carries out the reaction ATP-dependent cleavage of peptide bonds with broad specificity.. Allosterically activated by HslU binding. In terms of biological role, protease subunit of a proteasome-like degradation complex believed to be a general protein degrading machinery. This is ATP-dependent protease subunit HslV from Borrelia duttonii (strain Ly).